Here is a 147-residue protein sequence, read N- to C-terminus: Putative protein adenylyltransferase MJ1305 (147 aa).

The GSX(10)DXD motif motif lies at 32-46 (GSYARGTAVEYSDVD). Mg(2+)-binding residues include Asp-44 and Asp-46.

Belongs to the MntA antitoxin family. Mg(2+) is required as a cofactor.

The catalysed reaction is L-tyrosyl-[protein] + ATP = O-(5'-adenylyl)-L-tyrosyl-[protein] + diphosphate. It catalyses the reaction O-(5'-adenylyl)-L-tyrosyl-[protein] + ATP = O-[5'-(adenylyl-(5'-&gt;3')-adenylyl)]-L-tyrosyl-[protein] + diphosphate. Its function is as follows. Putative antitoxin component of a putative type VII toxin-antitoxin (TA) system. Its cognate toxin might be MJ1304, which it might AMPylate. This chain is Putative protein adenylyltransferase MJ1305, found in Methanocaldococcus jannaschii (strain ATCC 43067 / DSM 2661 / JAL-1 / JCM 10045 / NBRC 100440) (Methanococcus jannaschii).